We begin with the raw amino-acid sequence, 1209 residues long: Sterol 3-beta-glucosyltransferase (1209 aa).

A GRAM 1 domain is found at 167 to 217 (ERLIKKFLPNDDEKYIEEYPCWLLRDIMIQGHAYLTNKHLFFFAFIPNFES). A PH domain is found at 218–315 (DFNVTGSLRL…WVSSIKKQMF (98 aa)). In terms of domain architecture, GRAM 2 spans 568–634 (VRFRQHFSFD…EDVENCYKET (67 aa)). Residues serine 745, arginine 746, aspartate 748, asparagine 1019, valine 1048, histidine 1050, histidine 1063, serine 1066, glycine 1067, threonine 1068, aspartate 1087, and glutamine 1088 each coordinate UDP-alpha-D-glucose. Positions 1186–1209 (AKGNEKEEYSSEGSGSNDGSWLLI) are disordered. Positions 1196-1209 (SEGSGSNDGSWLLI) are enriched in low complexity.

It belongs to the glycosyltransferase 28 family.

The protein resides in the cytoplasm. It is found in the membrane. The enzyme catalyses a sterol + UDP-alpha-D-glucose = a sterol 3-beta-D-glucoside + UDP + H(+). It catalyses the reaction ergosterol + UDP-alpha-D-glucose = ergosteryl 3-beta-D-glucoside + UDP + H(+). Sterol glycosyltransferase responsible for the glycosylation of ergosterol to form ergosterol-glucoside. This chain is Sterol 3-beta-glucosyltransferase, found in Kluyveromyces lactis (strain ATCC 8585 / CBS 2359 / DSM 70799 / NBRC 1267 / NRRL Y-1140 / WM37) (Yeast).